The primary structure comprises 666 residues: Probable potassium transport system protein Kup (666 aa).

12 helical membrane-spanning segments follow: residues 16–36, 58–78, 99–119, 141–161, 167–187, 221–241, 253–273, 292–312, 343–363, 373–393, 402–422, and 424–444; these read GFII…LYTM, ISLI…LVAL, TPWL…DGAL, IFQN…LLFA, TGVI…FLGI, IFIL…YSDL, WPFV…WILA, FTMH…QALI, TYIP…VLLF, YGLA…FFLI, VLLM…ASAV, and FMHG…IMII.

The protein belongs to the HAK/KUP transporter (TC 2.A.72) family.

The protein localises to the cell membrane. The catalysed reaction is K(+)(in) + H(+)(in) = K(+)(out) + H(+)(out). Functionally, transport of potassium into the cell. Likely operates as a K(+):H(+) symporter. The polypeptide is Probable potassium transport system protein Kup (Streptococcus agalactiae serotype III (strain NEM316)).